Reading from the N-terminus, the 103-residue chain is Cytochrome c55X (103 aa).

Residues 1 to 17 (MARLALLLVLLAGTAVA) form the signal peptide. Residues Cys-36, Cys-39, and His-40 each coordinate heme c.

In terms of processing, binds 1 heme c group covalently per subunit.

It localises to the periplasm. Monoheme c-type cytochrome. The protein is Cytochrome c55X (nirC) of Paracoccus denitrificans (strain Pd 1222).